Reading from the N-terminus, the 898-residue chain is Probable LRR receptor-like serine/threonine-protein kinase At4g20450 (898 aa).

The N-terminal stretch at 1 to 24 (MEGIHKLIFLALIWIFLITNIVDA) is a signal peptide. Residues 25–535 (QDQQGFISLD…TGPGNNKKKL (511 aa)) lie on the Extracellular side of the membrane. Residues Asn40, Asn52, Asn98, Asn247, Asn253, Asn420, Asn443, Asn465, Asn484, and Asn489 are each glycosylated (N-linked (GlcNAc...) asparagine). LRR repeat units follow at residues 455-477 (QLQKLDLSNNNLTGKVPEFLAKM), 479-501 (LLTFINLSGNNLSGSIPQSLLNM), and 505-526 (GLITLLYNGNNLCLDPSCESET). The chain crosses the membrane as a helical span at residues 536 to 556 (LVPILASAASVGIIIAVLLLV). Topologically, residues 557–898 (NILLLRKKKP…FGPEHIPDAR (342 aa)) are cytoplasmic. Thr582 carries the phosphothreonine modification. The Protein kinase domain occupies 591–864 (NNFERPLGEG…QVANELQECL (274 aa)). Residues 597 to 605 (LGEGGFGVV) and Lys619 each bind ATP. Tyr664 is subject to Phosphotyrosine. The active-site Proton acceptor is the Asp716. Ser750 is subject to Phosphoserine. Thr751 carries the post-translational modification Phosphothreonine. Tyr764 is subject to Phosphotyrosine. The segment at 864–898 (LLTENSRKGGRHDVDSKSSLEQSTSFGPEHIPDAR) is disordered. A compositionally biased stretch (basic and acidic residues) spans 868 to 881 (NSRKGGRHDVDSKS).

This sequence belongs to the protein kinase superfamily. Ser/Thr protein kinase family.

It is found in the membrane. It carries out the reaction L-seryl-[protein] + ATP = O-phospho-L-seryl-[protein] + ADP + H(+). The catalysed reaction is L-threonyl-[protein] + ATP = O-phospho-L-threonyl-[protein] + ADP + H(+). This chain is Probable LRR receptor-like serine/threonine-protein kinase At4g20450, found in Arabidopsis thaliana (Mouse-ear cress).